The primary structure comprises 615 residues: tRNA uridine 5-carboxymethylaminomethyl modification enzyme MnmG (615 aa).

An FAD-binding site is contributed by glycine 11–glycine 16. Glycine 278 to phenylalanine 292 lines the NAD(+) pocket.

Belongs to the MnmG family. Homodimer. Heterotetramer of two MnmE and two MnmG subunits. The cofactor is FAD.

The protein resides in the cytoplasm. Its function is as follows. NAD-binding protein involved in the addition of a carboxymethylaminomethyl (cmnm) group at the wobble position (U34) of certain tRNAs, forming tRNA-cmnm(5)s(2)U34. This chain is tRNA uridine 5-carboxymethylaminomethyl modification enzyme MnmG, found in Myxococcus xanthus (strain DK1622).